The following is a 116-amino-acid chain: Putative BPES syndrome breakpoint region protein (116 aa).

As to expression, seems to be expressed only in testis.

This Homo sapiens (Human) protein is Putative BPES syndrome breakpoint region protein (BPESC1).